The following is a 200-amino-acid chain: uncharacterized protein (200 aa).

The AMMECR1 domain occupies 1–191 (MTSANIQMAV…LDYKDYVNYK (191 aa)).

This is an uncharacterized protein from Caenorhabditis elegans.